Reading from the N-terminus, the 273-residue chain is Pre-mRNA-splicing factor CWC23 (273 aa).

Residues 15–87 form the J domain; the sequence is DLYALLEVSI…SLRATYNRWL (73 aa).

The protein belongs to the DnaJ family. As to quaternary structure, associated with the spliceosome.

It is found in the cytoplasm. Its subcellular location is the nucleus. Involved in pre-mRNA splicing. May be involved in endoplasmic reticulum-associated protein degradation (ERAD) and required for growth at low and high temperatures. The chain is Pre-mRNA-splicing factor CWC23 (CWC23) from Eremothecium gossypii (strain ATCC 10895 / CBS 109.51 / FGSC 9923 / NRRL Y-1056) (Yeast).